We begin with the raw amino-acid sequence, 223 residues long: Neurotrophic factor BDNF precursor form (223 aa).

The signal sequence occupies residues 1-5 (SCMKA). The propeptide occupies 6-114 (APMKEVSIRG…AANMSMRVRR (109 aa)). N-linked (GlcNAc...) asparagine glycosylation is present at N107. Cystine bridges form between C127/C194 and C172/C223.

The protein belongs to the NGF-beta family.

The protein resides in the secreted. Functionally, promotes the survival of neuronal populations that are all located either in the central nervous system or directly connected to it. The sequence is that of Neurotrophic factor BDNF precursor form (BDNF) from Chilabothrus striatus (Haitian boa constrictor).